The chain runs to 159 residues: ATP synthase subunit b 2 (159 aa).

A helical membrane pass occupies residues 1–21 (MDATFWAFIALVIFVAIVVYM).

It belongs to the ATPase B chain family. As to quaternary structure, F-type ATPases have 2 components, F(1) - the catalytic core - and F(0) - the membrane proton channel. F(1) has five subunits: alpha(3), beta(3), gamma(1), delta(1), epsilon(1). F(0) has three main subunits: a(1), b(2) and c(10-14). The alpha and beta chains form an alternating ring which encloses part of the gamma chain. F(1) is attached to F(0) by a central stalk formed by the gamma and epsilon chains, while a peripheral stalk is formed by the delta and b chains.

The protein localises to the cell inner membrane. Its function is as follows. F(1)F(0) ATP synthase produces ATP from ADP in the presence of a proton or sodium gradient. F-type ATPases consist of two structural domains, F(1) containing the extramembraneous catalytic core and F(0) containing the membrane proton channel, linked together by a central stalk and a peripheral stalk. During catalysis, ATP synthesis in the catalytic domain of F(1) is coupled via a rotary mechanism of the central stalk subunits to proton translocation. Functionally, component of the F(0) channel, it forms part of the peripheral stalk, linking F(1) to F(0). This Brucella suis (strain ATCC 23445 / NCTC 10510) protein is ATP synthase subunit b 2.